A 469-amino-acid polypeptide reads, in one-letter code: 3-isopropylmalate dehydratase large subunit (469 aa).

[4Fe-4S] cluster is bound by residues cysteine 347, cysteine 407, and cysteine 410.

It belongs to the aconitase/IPM isomerase family. LeuC type 1 subfamily. In terms of assembly, heterodimer of LeuC and LeuD. It depends on [4Fe-4S] cluster as a cofactor.

It carries out the reaction (2R,3S)-3-isopropylmalate = (2S)-2-isopropylmalate. The protein operates within amino-acid biosynthesis; L-leucine biosynthesis; L-leucine from 3-methyl-2-oxobutanoate: step 2/4. In terms of biological role, catalyzes the isomerization between 2-isopropylmalate and 3-isopropylmalate, via the formation of 2-isopropylmaleate. This Synechococcus sp. (strain RCC307) protein is 3-isopropylmalate dehydratase large subunit.